The primary structure comprises 179 residues: ATP synthase subunit delta (179 aa).

It belongs to the ATPase delta chain family. In terms of assembly, F-type ATPases have 2 components, F(1) - the catalytic core - and F(0) - the membrane proton channel. F(1) has five subunits: alpha(3), beta(3), gamma(1), delta(1), epsilon(1). F(0) has three main subunits: a(1), b(2) and c(10-14). The alpha and beta chains form an alternating ring which encloses part of the gamma chain. F(1) is attached to F(0) by a central stalk formed by the gamma and epsilon chains, while a peripheral stalk is formed by the delta and b chains.

Its subcellular location is the cell membrane. F(1)F(0) ATP synthase produces ATP from ADP in the presence of a proton or sodium gradient. F-type ATPases consist of two structural domains, F(1) containing the extramembraneous catalytic core and F(0) containing the membrane proton channel, linked together by a central stalk and a peripheral stalk. During catalysis, ATP synthesis in the catalytic domain of F(1) is coupled via a rotary mechanism of the central stalk subunits to proton translocation. Functionally, this protein is part of the stalk that links CF(0) to CF(1). It either transmits conformational changes from CF(0) to CF(1) or is implicated in proton conduction. The polypeptide is ATP synthase subunit delta (Clostridium botulinum (strain Langeland / NCTC 10281 / Type F)).